The sequence spans 484 residues: Cysteine--tRNA ligase (484 aa).

Zn(2+) is bound at residue Cys29. A 'HIGH' region motif is present at residues 31–41 (ITVYDYCHLGH). Positions 215, 240, and 244 each coordinate Zn(2+). A 'KMSKS' region motif is present at residues 272–276 (KMSKS). Residue Lys275 coordinates ATP.

This sequence belongs to the class-I aminoacyl-tRNA synthetase family. As to quaternary structure, monomer. The cofactor is Zn(2+).

The protein resides in the cytoplasm. The enzyme catalyses tRNA(Cys) + L-cysteine + ATP = L-cysteinyl-tRNA(Cys) + AMP + diphosphate. This is Cysteine--tRNA ligase from Rippkaea orientalis (strain PCC 8801 / RF-1) (Cyanothece sp. (strain PCC 8801)).